The following is a 585-amino-acid chain: MYKRNGLMASVLVTSATPQGSSSSDSLEGQSCDYASKSYDAVVFDVLKVTPEEFASQITLMDIPVFKAIQPEELASCGWSKKEKHSLAPNVVAFTRRFNQVSFWVVREILTAQTLKIRAEILSHFVKIAKKLLELNNLHSLMSVVSALQSAPIFRLTKTWALLNRKDKTTFEKLDYLMSKEDNYKRTRDYIRSLKMVPSIPYLGIYLLDLIYIDSAYPASGSIMENEQRSNQMNNILRIIADLQVSCSYDHLTTLPHVQKYLKSVRYIEELQKFVEDDNYKLSLRIEPGSSSPRLVSSKEDLAGPSAGSSSARFRRRPTCPDTSVAGSLPTPPVPRHRKSHSLGNNLMCQLSVVESKSATFPSEKARHLLDDSVLESRSPRRGLTHTSSTAITNGLSLGSSESSEFSEEMSAGLESRGRLYATLGPNWRVPVRNSPRTRSCVYSPTSPCTCTVGSSATVPTMEGPLRRKTLLKEGRKPALSSWTRYWVVLSGATLLYYGAKSLRGTDRKHYKSTPGKKVSIVGWMVQLPDDPEHPDIFQLNNPDKGNVYKFQTGSRFHAILWHKHLDDACKSSRPQVPANLMSFE.

Residues 50 to 289 enclose the Ras-GEF domain; sequence TPEEFASQIT…YKLSLRIEPG (240 aa). Disordered stretches follow at residues 289 to 342 and 378 to 410; these read GSSS…KSHS and RSPRRGLTHTSSTAITNGLSLGSSESSEFSEEM. The span at 303 to 312 shows a compositional bias: low complexity; that stretch reads AGPSAGSSSA. The PXXP motif lies at 330-333; it reads PTPP. Residues 385–396 are compositionally biased toward polar residues; sequence THTSSTAITNGL. Positions 459 to 571 constitute a PH domain; it reads VPTMEGPLRR…WHKHLDDACK (113 aa). Positions 461–585 are required for stimulation of nucleotide exchange by RALA; sequence TMEGPLRRKT…QVPANLMSFE (125 aa).

As to quaternary structure, interacts with the SH3 domains of GRB2, NCK1, PLCG1 and SRC.

Its subcellular location is the cytoplasm. It is found in the cell membrane. Functionally, guanine nucleotide exchange factor for the small GTPase RALA. May be involved in cytoskeleton organization. The sequence is that of Ras-specific guanine nucleotide-releasing factor RalGPS1 (Ralgps1) from Mus musculus (Mouse).